The chain runs to 283 residues: Bifunctional protein FolD (283 aa).

NADP(+) contacts are provided by residues 157–159 (GNG) and I224.

It belongs to the tetrahydrofolate dehydrogenase/cyclohydrolase family. As to quaternary structure, homodimer.

The enzyme catalyses (6R)-5,10-methylene-5,6,7,8-tetrahydrofolate + NADP(+) = (6R)-5,10-methenyltetrahydrofolate + NADPH. It carries out the reaction (6R)-5,10-methenyltetrahydrofolate + H2O = (6R)-10-formyltetrahydrofolate + H(+). The protein operates within one-carbon metabolism; tetrahydrofolate interconversion. In terms of biological role, catalyzes the oxidation of 5,10-methylenetetrahydrofolate to 5,10-methenyltetrahydrofolate and then the hydrolysis of 5,10-methenyltetrahydrofolate to 10-formyltetrahydrofolate. The sequence is that of Bifunctional protein FolD from Mycoplasmoides gallisepticum (strain R(low / passage 15 / clone 2)) (Mycoplasma gallisepticum).